A 187-amino-acid chain; its full sequence is uncharacterized protein (187 aa).

One can recognise a Tyr recombinase domain in the interval Arg-53–Gly-187. Residues Arg-98 and Lys-123 contribute to the active site.

It belongs to the 'phage' integrase family.

This is an uncharacterized protein from Sinorhizobium fredii (strain NBRC 101917 / NGR234).